A 71-amino-acid polypeptide reads, in one-letter code: Pseudonajatoxin b (71 aa).

5 cysteine pairs are disulfide-bonded: cysteine 3-cysteine 21, cysteine 14-cysteine 42, cysteine 27-cysteine 31, cysteine 46-cysteine 58, and cysteine 59-cysteine 64.

Belongs to the three-finger toxin family. Long-chain subfamily. Type II alpha-neurotoxin sub-subfamily. In terms of tissue distribution, expressed by the venom gland.

It localises to the secreted. Its function is as follows. Binds with high affinity to muscular (alpha-1/CHRNA1) and neuronal (alpha-7/CHRNA7) nicotinic acetylcholine receptor (nAChR) and inhibits acetylcholine from binding to the receptor, thereby impairing neuromuscular and neuronal transmission. This chain is Pseudonajatoxin b, found in Pseudonaja textilis (Eastern brown snake).